Here is a 245-residue protein sequence, read N- to C-terminus: Large ribosomal subunit protein uL2 (245 aa).

The disordered stretch occupies residues 196–226; sequence SPYAHPHGGGSHQKGGTPVSKTAPPGQKVGF.

The protein belongs to the universal ribosomal protein uL2 family. Part of the 50S ribosomal subunit. Forms a bridge to the 30S subunit in the 70S ribosome.

Functionally, one of the primary rRNA binding proteins. Required for association of the 30S and 50S subunits to form the 70S ribosome, for tRNA binding and peptide bond formation. It has been suggested to have peptidyltransferase activity; this is somewhat controversial. Makes several contacts with the 16S rRNA in the 70S ribosome. In Pyrobaculum neutrophilum (strain DSM 2338 / JCM 9278 / NBRC 100436 / V24Sta) (Thermoproteus neutrophilus), this protein is Large ribosomal subunit protein uL2.